The following is a 333-amino-acid chain: Ferrochelatase (333 aa).

Residues His202 and Glu284 each contribute to the Fe cation site.

Belongs to the ferrochelatase family.

The protein localises to the cytoplasm. The enzyme catalyses heme b + 2 H(+) = protoporphyrin IX + Fe(2+). It participates in porphyrin-containing compound metabolism; protoheme biosynthesis; protoheme from protoporphyrin-IX: step 1/1. Functionally, catalyzes the ferrous insertion into protoporphyrin IX. This Francisella tularensis subsp. holarctica (strain LVS) protein is Ferrochelatase.